A 156-amino-acid chain; its full sequence is 2-C-methyl-D-erythritol 2,4-cyclodiphosphate synthase (156 aa).

Residues Asp-8 and His-10 each contribute to the a divalent metal cation site. Residues 8–10 (DVH) and 34–35 (HS) each bind 4-CDP-2-C-methyl-D-erythritol 2-phosphate. His-42 provides a ligand contact to a divalent metal cation. Residues 56-58 (DIG), 61-65 (FPDTD), 100-106 (AQRPKMA), 132-135 (TTEE), and Phe-139 contribute to the 4-CDP-2-C-methyl-D-erythritol 2-phosphate site.

It belongs to the IspF family. As to quaternary structure, homotrimer. Requires a divalent metal cation as cofactor.

The catalysed reaction is 4-CDP-2-C-methyl-D-erythritol 2-phosphate = 2-C-methyl-D-erythritol 2,4-cyclic diphosphate + CMP. It participates in isoprenoid biosynthesis; isopentenyl diphosphate biosynthesis via DXP pathway; isopentenyl diphosphate from 1-deoxy-D-xylulose 5-phosphate: step 4/6. Involved in the biosynthesis of isopentenyl diphosphate (IPP) and dimethylallyl diphosphate (DMAPP), two major building blocks of isoprenoid compounds. Catalyzes the conversion of 4-diphosphocytidyl-2-C-methyl-D-erythritol 2-phosphate (CDP-ME2P) to 2-C-methyl-D-erythritol 2,4-cyclodiphosphate (ME-CPP) with a corresponding release of cytidine 5-monophosphate (CMP). The polypeptide is 2-C-methyl-D-erythritol 2,4-cyclodiphosphate synthase (Clostridium perfringens (strain ATCC 13124 / DSM 756 / JCM 1290 / NCIMB 6125 / NCTC 8237 / Type A)).